Reading from the N-terminus, the 494-residue chain is DEAD-box ATP-dependent RNA helicase CshA (494 aa).

The short motif at 3–31 (ITFQDFNLSSDLMKAINRMGFEEATPIQA) is the Q motif element. The 171-residue stretch at 34 to 204 (IPLGLSNKDV…ERFMTEPEHV (171 aa)) folds into the Helicase ATP-binding domain. 47-54 (AQTGTGKT) contacts ATP. The DEAD box motif lies at 152-155 (DEAD). One can recognise a Helicase C-terminal domain in the interval 215–375 (NIQQFYLEVQ…RMKEPTLDEA (161 aa)). Residues 413 to 494 (VTVVAAAIKM…SGDRRQKKSY (82 aa)) form a required for dimerization or oligomerization region. Residues 429–494 (DTPVRLTDEA…SGDRRQKKSY (66 aa)) form a disordered region. Residues 443-452 (KRYKNQRSSK) show a composition bias toward basic residues. Over residues 473–488 (SYDKKRSNDRRSSGDR) the composition is skewed to basic and acidic residues.

Belongs to the DEAD box helicase family. CshA subfamily. In terms of assembly, homodimer or oligomer. May interact with RNA helicases CshB and DbpA (DeaD). Probably a component of the RNA degradosome complex composed of rny, rnjA, rnjB, pnp, pfkA and eno, and possibly also rnpA (although rnjA and rnjB's presence is unclear). Interacts with ribosomal proteins L1 and L3 (rplA and rplC) and the protein component of RNase RnpA. Interacts with the RNA polymerase core. The cofactor is Mg(2+).

The protein resides in the cytoplasm. The protein localises to the nucleoid. Its subcellular location is the cell membrane. The catalysed reaction is ATP + H2O = ADP + phosphate + H(+). Its activity is regulated as follows. RNA helicase activity is inhibited by EDTA. The most abundant DEAD-box RNA helicase. An ATP-dependent RNA helicase with RNA-dependent ATPase activity. May work in conjunction with the cold shock proteins to ensure proper initiation of transcription at low and optimal temperatures. In vitro, unwinds dsRNA in both 5'- and 3'- directions. Plays a role in ribosomal 50S subunit assembly. Its deletion leads to changes in mRNA levels for over 200 transcripts. This Bacillus subtilis (strain 168) protein is DEAD-box ATP-dependent RNA helicase CshA.